Consider the following 344-residue polypeptide: DnaJ homolog subfamily C member 25 (344 aa).

Residues 5–25 (WVLLVALSVLFLSGRAGALTE) form a helical membrane-spanning segment. The J domain occupies 33–108 (VCYDVLGVSR…ETRKDYDYML (76 aa)). Transmembrane regions (helical) follow at residues 134 to 154 (IVILVSVCAVSIFQYYSWWSS) and 228 to 248 (ILLFQIILFPYYMFKYISWYV).

The protein belongs to the DNAJC25 family.

It is found in the membrane. In Xenopus laevis (African clawed frog), this protein is DnaJ homolog subfamily C member 25 (dnajc25).